Here is a 352-residue protein sequence, read N- to C-terminus: Ion-translocating oxidoreductase complex subunit D (352 aa).

A run of 5 helical transmembrane segments spans residues 20-40, 42-62, 78-109, 123-143, and 148-168; these read IMLLVLLAAVPGIAAQLWFFG, GTLVQILLASVSALLAEALVL, ALLTGLLLAVSIPPLAPWWMVVLGTVFAVIIA, PAMIGYVVLLISFPVQMTSWL, and IAVNIPGFIDAIQVIFSGHTA. Threonine 187 bears the FMN phosphoryl threonine mark. 4 consecutive transmembrane segments (helical) span residues 214 to 234, 242 to 262, 267 to 287, and 301 to 318; these read ILAGAGWQWVNLAWLAGGVWL, WHIPLSFLVTLALCATLGWLF, LAAPQIHLLSGATMLGAFFIL, and LMFGALAGLLVWLIRSFG.

This sequence belongs to the NqrB/RnfD family. In terms of assembly, the complex is composed of six subunits: RsxA, RsxB, RsxC, RsxD, RsxE and RsxG. It depends on FMN as a cofactor.

It localises to the cell inner membrane. In terms of biological role, part of a membrane-bound complex that couples electron transfer with translocation of ions across the membrane. Required to maintain the reduced state of SoxR. This Shigella flexneri serotype 5b (strain 8401) protein is Ion-translocating oxidoreductase complex subunit D.